The primary structure comprises 152 residues: Transcriptional regulator MraZ (152 aa).

SpoVT-AbrB domains are found at residues 5–52 (ATMV…PLPE) and 81–124 (ASEC…DEQT).

It belongs to the MraZ family. Forms oligomers.

The protein localises to the cytoplasm. The protein resides in the nucleoid. Its function is as follows. Negatively regulates its own expression and that of the subsequent genes in the proximal part of the division and cell wall (dcw) gene cluster. Acts by binding directly to DNA. May also regulate the expression of genes outside the dcw cluster. This Yersinia pestis bv. Antiqua (strain Antiqua) protein is Transcriptional regulator MraZ.